The sequence spans 395 residues: Cystathionine beta-lyase (395 aa).

N6-(pyridoxal phosphate)lysine is present on lysine 210.

The protein belongs to the trans-sulfuration enzymes family. As to quaternary structure, homotetramer. It depends on pyridoxal 5'-phosphate as a cofactor.

The protein localises to the cytoplasm. It carries out the reaction L,L-cystathionine + H2O = L-homocysteine + pyruvate + NH4(+). It catalyses the reaction an S-substituted L-cysteine + H2O = a thiol + pyruvate + NH4(+). It participates in amino-acid biosynthesis; L-methionine biosynthesis via de novo pathway; L-homocysteine from L-cystathionine: step 1/1. Catalyzes the cleavage of cystathionine to homocysteine, pyruvate and ammonia during methionine biosynthesis. The polypeptide is Cystathionine beta-lyase (metC) (Salmonella typhimurium (strain LT2 / SGSC1412 / ATCC 700720)).